The sequence spans 120 residues: Seripauperin-13 (120 aa).

An N-terminal signal peptide occupies residues 1–25 (MVKLTSIAAGVAAIAATASATTTLA).

It belongs to the SRP1/TIP1 family. Seripauperin subfamily.

The sequence is that of Seripauperin-13 (PAU13) from Saccharomyces cerevisiae (strain ATCC 204508 / S288c) (Baker's yeast).